The sequence spans 755 residues: Anaphase-promoting complex subunit 5 (755 aa).

At Ser195 the chain carries Phosphoserine. 13 TPR repeats span residues 209–249 (QKQA…FNPD), 250–300 (FAEA…GRSL), 301–337 (RYAA…SNDH), 338–378 (VCLQ…YLAS), 379–418 (LGIQ…SELI), 419–466 (DISI…TESF), 467–500 (AVAL…FPPN), 501–540 (SQHA…ALNS), 541–580 (IEGV…TEMV), 581–620 (ISVL…QYLA), 621–660 (SETV…ILDK), 661–696 (GRAM…NLNE), and 697–736 (AKNY…CAML). Residue Thr232 is modified to Phosphothreonine.

Belongs to the APC5 family. As to quaternary structure, the mammalian APC/C is composed at least of 14 distinct subunits ANAPC1, ANAPC2, CDC27/APC3, ANAPC4, ANAPC5, CDC16/APC6, ANAPC7, CDC23/APC8, ANAPC10, ANAPC11, CDC26/APC12, ANAPC13, ANAPC15 and ANAPC16 that assemble into a complex of at least 19 chains with a combined molecular mass of around 1.2 MDa; APC/C interacts with FZR1 and FBXO5.

It is found in the nucleus. It localises to the cytoplasm. The protein resides in the cytoskeleton. Its subcellular location is the spindle. It participates in protein modification; protein ubiquitination. Component of the anaphase promoting complex/cyclosome (APC/C), a cell cycle-regulated E3 ubiquitin ligase that controls progression through mitosis and the G1 phase of the cell cycle. The APC/C complex acts by mediating ubiquitination and subsequent degradation of target proteins: it mainly mediates the formation of 'Lys-11'-linked polyubiquitin chains and, to a lower extent, the formation of 'Lys-48'- and 'Lys-63'-linked polyubiquitin chains. The APC/C complex catalyzes assembly of branched 'Lys-11'-/'Lys-48'-linked branched ubiquitin chains on target proteins. This is Anaphase-promoting complex subunit 5 (ANAPC5) from Homo sapiens (Human).